The primary structure comprises 309 residues: MIYQSTLNKPLTISGIGLHTGRQITMILRPAEPDNGIIFHCTDGERRVSIPAVSANVVDTRLATVIGKDGLSVSTIEHLMAALSACGIDNLHIDIDGPEVPVMDGSAAPFVALLQETGNRVQEKRRKYLAIRKPITLVDGEKRVSIIPSRFFRITFDIAFDHPCIGLQHRAIKVNTETFRKEIAPARTFGFLHEVEYLKANGLALGGSLDNAVVIGEEGVLNPDGVRFEDECVRHKILDAVGDFSLLGHRVLGHVKAYKAGHDINHQMVEKILANADCWQLVESGEAASHGSLSMTGCAAMAMAGVAEA.

Zn(2+)-binding residues include H78, H235, and D239. H262 serves as the catalytic Proton donor.

The protein belongs to the LpxC family. It depends on Zn(2+) as a cofactor.

It carries out the reaction a UDP-3-O-[(3R)-3-hydroxyacyl]-N-acetyl-alpha-D-glucosamine + H2O = a UDP-3-O-[(3R)-3-hydroxyacyl]-alpha-D-glucosamine + acetate. The protein operates within glycolipid biosynthesis; lipid IV(A) biosynthesis; lipid IV(A) from (3R)-3-hydroxytetradecanoyl-[acyl-carrier-protein] and UDP-N-acetyl-alpha-D-glucosamine: step 2/6. Its function is as follows. Catalyzes the hydrolysis of UDP-3-O-myristoyl-N-acetylglucosamine to form UDP-3-O-myristoylglucosamine and acetate, the committed step in lipid A biosynthesis. This Syntrophotalea carbinolica (strain DSM 2380 / NBRC 103641 / GraBd1) (Pelobacter carbinolicus) protein is UDP-3-O-acyl-N-acetylglucosamine deacetylase.